The primary structure comprises 367 residues: Germination protease (367 aa).

Residues 1–13 (MEEQQIPFQVRTD) constitute a propeptide that is removed on maturation. A disordered region spans residues 267 to 287 (KDDPSKSLTPAGMSFGNRKLT).

It belongs to the peptidase A25 family. Homotetramer. Autoproteolytically processed. The inactive tetrameric zymogen termed p46 autoprocesses to a smaller form termed p41, which is active only during spore germination.

The enzyme catalyses Endopeptidase action with P4 Glu or Asp, P1 preferably Glu &gt; Asp, P1' hydrophobic and P2' Ala.. Its function is as follows. Initiates the rapid degradation of small, acid-soluble proteins during spore germination. In Oceanobacillus iheyensis (strain DSM 14371 / CIP 107618 / JCM 11309 / KCTC 3954 / HTE831), this protein is Germination protease.